A 132-amino-acid polypeptide reads, in one-letter code: MKALTFPKSHRLLKPSDYSRVFNDVTLKVPHRNFLILASANSLGHARVGLIFSKKNLRLAVQRNRIKRQVRETFRLQPDLPGLDIIVLGRQGLDRLDNDTVRSSLNDLWHRVKKKYRQSTPDQSVGNPRGTE.

The protein belongs to the RnpA family. In terms of assembly, consists of a catalytic RNA component (M1 or rnpB) and a protein subunit.

The enzyme catalyses Endonucleolytic cleavage of RNA, removing 5'-extranucleotides from tRNA precursor.. Its function is as follows. RNaseP catalyzes the removal of the 5'-leader sequence from pre-tRNA to produce the mature 5'-terminus. It can also cleave other RNA substrates such as 4.5S RNA. The protein component plays an auxiliary but essential role in vivo by binding to the 5'-leader sequence and broadening the substrate specificity of the ribozyme. The polypeptide is Ribonuclease P protein component (Marinobacter nauticus (strain ATCC 700491 / DSM 11845 / VT8) (Marinobacter aquaeolei)).